Here is a 476-residue protein sequence, read N- to C-terminus: Sulfate adenylyltransferase subunit 1 (476 aa).

Residues 24 to 238 (KSLLRFLTCG…ELLEYVDIDR (215 aa)) enclose the tr-type G domain. The G1 stretch occupies residues 33-40 (GSVDDGKS). 33–40 (GSVDDGKS) lines the GTP pocket. Residues 91–95 (GITID) are G2. The interval 112 to 115 (DTPG) is G3. GTP contacts are provided by residues 112–116 (DTPGH) and 167–170 (NKMD). Positions 167–170 (NKMD) are G4. Residues 205-207 (SAL) are G5.

The protein belongs to the TRAFAC class translation factor GTPase superfamily. Classic translation factor GTPase family. CysN/NodQ subfamily. Heterodimer composed of CysD, the smaller subunit, and CysN.

It carries out the reaction sulfate + ATP + H(+) = adenosine 5'-phosphosulfate + diphosphate. It functions in the pathway sulfur metabolism; hydrogen sulfide biosynthesis; sulfite from sulfate: step 1/3. Its function is as follows. With CysD forms the ATP sulfurylase (ATPS) that catalyzes the adenylation of sulfate producing adenosine 5'-phosphosulfate (APS) and diphosphate, the first enzymatic step in sulfur assimilation pathway. APS synthesis involves the formation of a high-energy phosphoric-sulfuric acid anhydride bond driven by GTP hydrolysis by CysN coupled to ATP hydrolysis by CysD. The polypeptide is Sulfate adenylyltransferase subunit 1 (Vibrio cholerae serotype O1 (strain M66-2)).